The sequence spans 377 residues: Floricaula/leafy homolog (377 aa).

Basic and acidic residues predominate over residues 116 to 126 (RRRLDEEDPRR). The disordered stretch occupies residues 116–190 (RRRLDEEDPR…RKKGQRKVVD (75 aa)). Over residues 131–141 (SGDNNTNTLDA) the composition is skewed to polar residues. 3 DNA-binding regions span residues 206 to 210 (REHPF), 275 to 282 (NKPKMRHY), and 346 to 349 (YVPT).

The protein belongs to the FLO/LFY family. As to expression, in developing inflorescences, leaf primordia and very young leaves.

It localises to the nucleus. Probable transcription factor. This Populus trichocarpa (Western balsam poplar) protein is Floricaula/leafy homolog (FL).